The following is a 197-amino-acid chain: Protein jagunal (197 aa).

The Cytoplasmic segment spans residues 1-39 (MATRGGPMVAGTDGNDFEFRQRVAGTYQISLLNKSRLKY). Residues 40–60 (CIFFHALLFFVMLAKLTSDIL) traverse the membrane as a helical segment. The Lumenal portion of the chain corresponds to 61 to 78 (DRLDIFVLEIEELEVPSP). A helical membrane pass occupies residues 79–99 (LWWEYVWAGSLLTSFLGLSAA). Residues 100–109 (RGNKVREMQK) lie on the Cytoplasmic side of the membrane. The chain crosses the membrane as a helical span at residues 110-130 (YMIAILVFAILPLLYCFAYYF). The Lumenal portion of the chain corresponds to 131 to 159 (SDVWEFATMDKSVELDETDIFIWRGYPYG). Residues 160–180 (VFWYAFCFVGFQVHGFTLYFA) traverse the membrane as a helical segment. Residues 181 to 197 (YNLVKVWKARTATRKFQ) are Cytoplasmic-facing.

The protein belongs to the jagunal family.

Its subcellular location is the endoplasmic reticulum membrane. Its function is as follows. Required for endoplasmic reticulum organization and proper vesicular traffic during vitellogenesis. Required for oocyte and bristle growth. The sequence is that of Protein jagunal from Drosophila pseudoobscura pseudoobscura (Fruit fly).